A 656-amino-acid chain; its full sequence is Methionine--tRNA ligase (656 aa).

Positions 13 to 23 (YYPSGNLHIGH) match the 'HIGH' region motif. The 'KMSKS' region signature appears at 308-312 (KMSKS). Lys-311 lines the ATP pocket. In terms of domain architecture, tRNA-binding spans 556–656 (DFDKVEIKAA…SAIPNGAVIK (101 aa)).

Belongs to the class-I aminoacyl-tRNA synthetase family. MetG type 2B subfamily. In terms of assembly, homodimer.

Its subcellular location is the cytoplasm. It catalyses the reaction tRNA(Met) + L-methionine + ATP = L-methionyl-tRNA(Met) + AMP + diphosphate. Is required not only for elongation of protein synthesis but also for the initiation of all mRNA translation through initiator tRNA(fMet) aminoacylation. The sequence is that of Methionine--tRNA ligase from Staphylococcus epidermidis (strain ATCC 12228 / FDA PCI 1200).